A 998-amino-acid chain; its full sequence is Kinesin-like protein KIF19 (998 aa).

The Kinesin motor domain maps to 11–346; the sequence is QLMVALRVRP…LTYAGRAKNI (336 aa). Residue 104–111 coordinates ATP; sequence GPTGCGKT. Coiled coils occupy residues 360 to 391 and 424 to 452; these read HIAQ…RGQA and EQLA…EVQI. Residues 482–494 show a composition bias toward basic and acidic residues; sequence ECYAKDDSEKDSD. Residues 482 to 503 are disordered; it reads ECYAKDDSEKDSDTGDDQPDIL. Residues 507–552 adopt a coiled-coil conformation; sequence EVAAARESIAALVDEQKQLRKQKLALEQRCRELRARGRRLEETLPR. Composition is skewed to polar residues over residues 662–676, 684–697, 746–761, and 836–852; these read SSLP…SLTP, KTLS…QNSA, SLGS…SENL, and TLQH…STGE. Disordered regions lie at residues 662–706, 746–765, 794–911, and 948–998; these read SSLP…TESE, SLGS…SEIP, GTEG…THLL, and KLPP…SRHN. Residues 989-998 show a composition bias toward basic and acidic residues; the sequence is HGKDGCSRHN.

The protein belongs to the TRAFAC class myosin-kinesin ATPase superfamily. Kinesin family.

The protein localises to the cytoplasm. It localises to the cytoskeleton. Its subcellular location is the cell projection. It is found in the cilium. In terms of biological role, plus end-directed microtubule-dependent motor protein that regulates the length of motile cilia by mediating depolymerization of microtubules at ciliary tips. This Homo sapiens (Human) protein is Kinesin-like protein KIF19 (KIF19).